Consider the following 325-residue polypeptide: UPF0324 membrane protein Bd1437 (325 aa).

8 helical membrane-spanning segments follow: residues 21–43 (IAAL…GIVL), 58–80 (YTHH…MVVG), 87–105 (IGYT…MLIG), 115–137 (STLI…APTI), 144–166 (VSVA…PWIG), 211–230 (ARAL…YFRG), 243–260 (PWFI…TWIP), and 302–324 (LQGV…IGWI).

It belongs to the UPF0324 family.

Its subcellular location is the cell membrane. The chain is UPF0324 membrane protein Bd1437 from Bdellovibrio bacteriovorus (strain ATCC 15356 / DSM 50701 / NCIMB 9529 / HD100).